Reading from the N-terminus, the 263-residue chain is Palmitoyltransferase ZDHHC22 (263 aa).

At 1-9 (MLALRLLNV) the chain is on the cytoplasmic side. The helical transmembrane segment at 10–30 (VAPAYFLCISLVTFVLQLFLF) threads the bilayer. The Lumenal portion of the chain corresponds to 31–48 (LPSMREDPTATPLFSPAV). Residues 49–69 (LHGALFLFLSANALGNYVLVI) form a helical membrane-spanning segment. At 70–125 (QNSPDDLGTCQGTMSQRPQCPPPSTHFCRVCSRVTLRHDHHCFFTGNCIGSRNMRN) the chain is on the cytoplasmic side. Residues 91 to 131 (PPSTHFCRVCSRVTLRHDHHCFFTGNCIGSRNMRNFILFCL) enclose the DHHC domain. Cysteine 111 serves as the catalytic S-palmitoyl cysteine intermediate. The next 2 helical transmembrane spans lie at 126-146 (FILF…AGVA) and 147-167 (YISA…TLLP). At 168 to 182 (TSISQFFSGAVLGSD) the chain is on the cytoplasmic side. A helical membrane pass occupies residues 183-203 (MFVILMLYLWFAVGLACAGFC). Over 204 to 263 (CHQLLLILRGQTRYQVRKGMAVRARPWRKNLQEVFGKRWLLGLLVPMFNVGTESSKQQDK) the chain is Lumenal.

It belongs to the DHHC palmitoyltransferase family. In terms of assembly, interacts with CNN3.

Its subcellular location is the endoplasmic reticulum membrane. The protein localises to the golgi apparatus membrane. The enzyme catalyses L-cysteinyl-[protein] + hexadecanoyl-CoA = S-hexadecanoyl-L-cysteinyl-[protein] + CoA. In terms of biological role, palmitoyltransferase that could catalyze the addition of palmitate onto various protein substrates and be involved in a variety of cellular processes. Catalyzes the palmitoylation of KCNMA1, regulating localization of KCNMA1 to the plasma membrane. Might also mediate palmitoylation of CNN3. This is Palmitoyltransferase ZDHHC22 from Mus musculus (Mouse).